Reading from the N-terminus, the 514-residue chain is Putative exoglucanase type C (514 aa).

A signal peptide spans 1-17 (MYRIVATASALIAAARA). Residues 18–439 (QQVCSLNTET…RDVPNSKVSF (422 aa)) form a catalytic region. E229 functions as the Nucleophile in the catalytic mechanism. E234 serves as the catalytic Proton donor. N287 carries N-linked (GlcNAc...) asparagine glycosylation. The span at 408–424 (STKVGSQRGSCATTSGK) shows a compositional bias: polar residues. 2 disordered regions span residues 408–433 (STKVGSQRGSCATTSGKPSDLERDVP) and 448–485 (GSTYKSDGTTPNPPASSSTTGSSTPTNPPAGSVDQWGQ). The linker stretch occupies residues 440–482 (SNIKFGPIGSTYKSDGTTPNPPASSSTTGSSTPTNPPAGSVDQ). The span at 462–479 (ASSSTTGSSTPTNPPAGS) shows a compositional bias: low complexity. The CBM1 domain occupies 478–514 (GSVDQWGQCGGQNYSGPTTCKSPFTCKKINDFYSQCQ). 2 disulfide bridges follow: C486/C503 and C497/C513. N490 carries N-linked (GlcNAc...) asparagine glycosylation.

It belongs to the glycosyl hydrolase 7 (cellulase C) family.

The catalysed reaction is Hydrolysis of (1-&gt;4)-beta-D-glucosidic linkages in cellulose and cellotetraose, releasing cellobiose from the non-reducing ends of the chains.. The polypeptide is Putative exoglucanase type C (Fusarium oxysporum (Fusarium vascular wilt)).